Reading from the N-terminus, the 394-residue chain is UDP-glucose 6-dehydrogenase (394 aa).

Residues 2–19 (KIAI…AVLL), valine 11, aspartate 29, lysine 34, threonine 83, threonine 118, and glutamate 145 each bind NAD(+). Residues 141 to 145 (EFLRE), lysine 203, asparagine 207, 248 to 252 (YNNPS), and glycine 256 contribute to the substrate site. Tyrosine 258 lines the NAD(+) pocket. Cysteine 259 serves as the catalytic Nucleophile. Lysine 262 is an NAD(+) binding site. Lysine 313 lines the substrate pocket. Arginine 320 provides a ligand contact to NAD(+).

It belongs to the UDP-glucose/GDP-mannose dehydrogenase family.

The enzyme catalyses UDP-alpha-D-glucose + 2 NAD(+) + H2O = UDP-alpha-D-glucuronate + 2 NADH + 3 H(+). It participates in nucleotide-sugar biosynthesis; UDP-alpha-D-glucuronate biosynthesis; UDP-alpha-D-glucuronate from UDP-alpha-D-glucose: step 1/1. Its function is as follows. Catalyzes the formation of UDP-glucuronic acid which is required for capsular hyaluronic acid synthesis. Directly responsible for the transformation of some unencapsulated serotype-3 SP mutants to the encapsulated phenotype. The chain is UDP-glucose 6-dehydrogenase (cap3A) from Streptococcus pneumoniae.